The chain runs to 305 residues: Large ribosomal subunit protein uL2m (305 aa).

The transit peptide at 1 to 60 directs the protein to the mitochondrion; the sequence is MALCALTRALRSLNLAPPTVAAPAPSLFPAAQMMNNGLLQQPSALMLLPCRPVLTSVALN. A disordered region spans residues 264–283; the sequence is RWLGKRPNSGRWHRKGGWAG. The span at 274 to 283 shows a compositional bias: basic residues; sequence RWHRKGGWAG.

The protein belongs to the universal ribosomal protein uL2 family. As to quaternary structure, component of the mitochondrial large ribosomal subunit (mt-LSU). Mature mammalian 55S mitochondrial ribosomes consist of a small (28S) and a large (39S) subunit. The 28S small subunit contains a 12S ribosomal RNA (12S mt-rRNA) and 30 different proteins. The 39S large subunit contains a 16S rRNA (16S mt-rRNA), a copy of mitochondrial valine transfer RNA (mt-tRNA(Val)), which plays an integral structural role, and 52 different proteins.

The protein resides in the mitochondrion. This chain is Large ribosomal subunit protein uL2m (MRPL2), found in Homo sapiens (Human).